We begin with the raw amino-acid sequence, 698 residues long: Serine/alanine racemase (698 aa).

The Cytoplasmic portion of the chain corresponds to 1–10 (MKNKGIDQFR). The helical transmembrane segment at 11-31 (VIAAMMVVAIHCLPLHYLWPE) threads the bilayer. At 32-42 (GDILITLTIFR) the chain is on the extracellular side. Residues 43 to 63 (VAVPFFFMISGYYVFAELAVA) form a helical membrane-spanning segment. At 64–81 (NSYPSRQRVFNFIKKQLK) the chain is on the cytoplasmic side. A helical membrane pass occupies residues 82–102 (VYLLATLMFLPLALYSQTIGF). The Extracellular segment spans residues 103–121 (DLPVGTLVQVLLVNGILYH). A helical transmembrane segment spans residues 122–142 (LWYFPALITGSLLLTSLLIHV). At 143-147 (SFKKV) the chain is on the cytoplasmic side. A helical transmembrane segment spans residues 148-168 (FWLAAGLYLIGLGGDSWFGLI). At 169–183 (QQTPIEPFYTAVFHL) the chain is on the extracellular side. Residues 184–204 (LDGTRNGIFFTPLFLCLGVLV) traverse the membrane as a helical segment. The Cytoplasmic segment spans residues 205-216 (RKQSEKRSLSKT). A helical membrane pass occupies residues 217–237 (ALFFLISLIGLLIESAYLHGF). Residues 238–244 (SIPKHDS) are Extracellular-facing. The helical transmembrane segment at 245-265 (MYLFLPVVLFFLFPLILRWHP) threads the bilayer. The Cytoplasmic segment spans residues 266-274 (HRTWKHPGQ). A helical transmembrane segment spans residues 275–295 (LSLWLYLLHPYTIAGTHFLSQ). Residues 296–301 (KISILQ) are Extracellular-facing. The chain crosses the membrane as a helical span at residues 302–322 (NNLINYLVVLILTIGFICLFL). Over 323 to 698 (RQKHSWFRHK…IGPRVSARIK (376 aa)) the chain is Cytoplasmic. Residues 332–698 (KQTTPVKRAV…IGPRVSARIK (367 aa)) are racemase. Lysine 371 (proton acceptor) is an active-site residue. Lysine 371 is subject to N6-(pyridoxal phosphate)lysine. Arginine 465 is a substrate binding site. Tyrosine 597 functions as the Proton acceptor in the catalytic mechanism. Methionine 646 contacts substrate.

The protein in the N-terminal section; belongs to the acyltransferase 3 family. In the C-terminal section; belongs to the alanine racemase family. As to quaternary structure, homodimer. It depends on pyridoxal 5'-phosphate as a cofactor.

The protein resides in the cell membrane. The enzyme catalyses L-alanine = D-alanine. The catalysed reaction is L-serine = D-serine. It participates in amino-acid biosynthesis; D-alanine biosynthesis; D-alanine from L-alanine: step 1/1. Catalyzes the interconversion of L-serine and D-serine, and L-alanine and D-alanine. L-alanine is racemized at a rate that is 14% of that of L-serine. Together with VanC/VanC1 and VanXYC, required for vancomycin resistance in E.gallinarum strain BM4174. The protein is Serine/alanine racemase of Enterococcus gallinarum.